Reading from the N-terminus, the 423-residue chain is Lipoamide acyltransferase component of branched-chain alpha-keto acid dehydrogenase complex (423 aa).

The Lipoyl-binding domain occupies 3-78 (THVIKMPDIG…AVGSELIRIE (76 aa)). Position 44 is an N6-lipoyllysine (lysine 44). Positions 137–174 (LASPAVRKRALDAGIELRYVHGSGPAGRILHEDLDAFM) constitute a Peripheral subunit-binding (PSBD) domain. Catalysis depends on residues histidine 395 and aspartate 399.

It belongs to the 2-oxoacid dehydrogenase family. In terms of assembly, forms a 24-polypeptide structural core with octahedral symmetry. The cofactor is (R)-lipoate.

The enzyme catalyses N(6)-[(R)-dihydrolipoyl]-L-lysyl-[protein] + 2-methylpropanoyl-CoA = N(6)-[(R)-S(8)-2-methylpropanoyldihydrolipoyl]-L-lysyl-[protein] + CoA. Its function is as follows. The branched-chain alpha-keto dehydrogenase complex catalyzes the overall conversion of alpha-keto acids to acyl-CoA and CO(2). It contains multiple copies of three enzymatic components: branched-chain alpha-keto acid decarboxylase (E1), lipoamide acyltransferase (E2) and lipoamide dehydrogenase (E3). This is Lipoamide acyltransferase component of branched-chain alpha-keto acid dehydrogenase complex (bkdB) from Pseudomonas putida (Arthrobacter siderocapsulatus).